We begin with the raw amino-acid sequence, 227 residues long: Transmembrane emp24 domain-containing protein 1 (227 aa).

The N-terminal stretch at methionine 1–glycine 23 is a signal peptide. Topologically, residues alanine 24–asparagine 194 are extracellular. Residues lysine 43 to phenylalanine 125 form the GOLD domain. Residues glutamate 145 to glutamine 170 are a coiled coil. Residues phenylalanine 195–leucine 215 form a helical membrane-spanning segment. Residues lysine 216–threonine 227 are Cytoplasmic-facing. Positions phenylalanine 218–phenylalanine 219 match the COPII vesicle coat-binding motif. The COPI vesicle coat-binding motif lies at phenylalanine 218–threonine 227.

Belongs to the EMP24/GP25L family. Homodimer in endoplasmic reticulum, endoplasmic reticulum-Golgi intermediate compartment and cis-Golgi network. Interacts with IL1RL1. Interacts with RNF26; this interaction is important to modulate innate immune signaling through the cGAS-STING pathway.

The protein localises to the cell membrane. The protein resides in the endoplasmic reticulum membrane. Its subcellular location is the golgi apparatus. It localises to the cis-Golgi network membrane. It is found in the endoplasmic reticulum-Golgi intermediate compartment membrane. Its function is as follows. Potential role in vesicular protein trafficking, mainly in the early secretory pathway. May act as a cargo receptor at the lumenal side for incorporation of secretory cargo molecules into transport vesicles and may be involved in vesicle coat formation at the cytoplasmic side. Plays a positive role in IL-33-mediated IL-8 and IL-6 production by interacting with interleukin-33 receptor IL1RL1. Plays also a role in the modulation of innate immune signaling through the cGAS-STING pathway by interacting with RNF26. The protein is Transmembrane emp24 domain-containing protein 1 (TMED1) of Pongo abelii (Sumatran orangutan).